The sequence spans 222 residues: N-(5'-phosphoribosyl)anthranilate isomerase (222 aa).

The protein belongs to the TrpF family.

It carries out the reaction N-(5-phospho-beta-D-ribosyl)anthranilate = 1-(2-carboxyphenylamino)-1-deoxy-D-ribulose 5-phosphate. Its pathway is amino-acid biosynthesis; L-tryptophan biosynthesis; L-tryptophan from chorismate: step 3/5. This is N-(5'-phosphoribosyl)anthranilate isomerase from Prosthecochloris aestuarii (strain DSM 271 / SK 413).